The following is a 214-amino-acid chain: MKHVSSPHPCAAIASARVWLGLVLVALLAGCASQAPSPDQSRDRGDWEAQIERLQTLDAWSLAGKVGLRTNEGSESANIDWQQRPDTYRILISGPFGAGRTLLTGRPGAVTLTNGEGRFEAETPEALMEQQLGWSLPISALDYWVRGLPAPEGGERIEHDEQGFPQQLRQFGWTIEYRDWTRADTLWMPRRLVMTYGELRATLVANQWQLLSDT.

Positions Met1–Gly30 are cleaved as a signal peptide. Cys31 carries N-palmitoyl cysteine lipidation. Cys31 carries S-diacylglycerol cysteine lipidation.

It belongs to the LolB family. As to quaternary structure, monomer.

Its subcellular location is the cell outer membrane. Plays a critical role in the incorporation of lipoproteins in the outer membrane after they are released by the LolA protein. In Chromohalobacter salexigens (strain ATCC BAA-138 / DSM 3043 / CIP 106854 / NCIMB 13768 / 1H11), this protein is Outer-membrane lipoprotein LolB.